The following is a 526-amino-acid chain: Histidine ammonia-lyase (526 aa).

The 5-imidazolinone (Ala-Gly) cross-link spans 143-145 (ASG). Ser-144 carries the post-translational modification 2,3-didehydroalanine (Ser).

Belongs to the PAL/histidase family. In terms of processing, contains an active site 4-methylidene-imidazol-5-one (MIO), which is formed autocatalytically by cyclization and dehydration of residues Ala-Ser-Gly.

It localises to the cytoplasm. The enzyme catalyses L-histidine = trans-urocanate + NH4(+). Its pathway is amino-acid degradation; L-histidine degradation into L-glutamate; N-formimidoyl-L-glutamate from L-histidine: step 1/3. This Aromatoleum aromaticum (strain DSM 19018 / LMG 30748 / EbN1) (Azoarcus sp. (strain EbN1)) protein is Histidine ammonia-lyase.